We begin with the raw amino-acid sequence, 95 residues long: Integration host factor subunit alpha (95 aa).

Residues 51–71 are disordered; the sequence is NFDLRDKNERPGRNPKTGEDI. A compositionally biased stretch (basic and acidic residues) spans 53-69; the sequence is DLRDKNERPGRNPKTGE.

It belongs to the bacterial histone-like protein family. In terms of assembly, heterodimer of an alpha and a beta chain.

Functionally, this protein is one of the two subunits of integration host factor, a specific DNA-binding protein that functions in genetic recombination as well as in transcriptional and translational control. The chain is Integration host factor subunit alpha from Vibrio vulnificus (strain CMCP6).